Reading from the N-terminus, the 718-residue chain is Tensin-4 (718 aa).

An N-terminal signal peptide occupies residues methionine 1–leucine 14. Disordered regions lie at residues arginine 188–alanine 244 and leucine 272–methionine 437. The span at serine 192 to glycine 207 shows a compositional bias: polar residues. The span at serine 208–serine 219 shows a compositional bias: low complexity. The residue at position 230 (serine 230) is a Phosphoserine. A compositionally biased stretch (low complexity) spans leucine 272–serine 304. 4 stretches are compositionally biased toward polar residues: residues cysteine 306–serine 316, glutamine 337–methionine 349, proline 367–lysine 393, and threonine 405–lysine 415. The SH2 domain maps to tryptophan 451–glutamine 558. One can recognise a PTB domain in the interval cysteine 585–leucine 711.

The protein belongs to the PTEN phosphatase protein family. As to quaternary structure, interacts (via SH2 domain) with Rho GTPase-activating protein DLC1 (via C-terminus); the interaction is independent of DLC1 tyrosine phosphorylation. Interacts with integrin ITGB1; the interaction displaces tensin TNS3 from the ITGB1 cytoplasmic tail and promotes ITGB1 stability. Interacts (via SH2 domain) with E3 ubiquitin-protein ligase CBL (phosphorylated on 'Tyr-781'); the interaction is enhanced in the presence of EGF and reduces interaction of CBL with EGFR. Interacts (via SH2 domain) with receptor tyrosine kinase MET (when phosphorylated); the interaction increases MET protein stability.

The protein resides in the cell junction. The protein localises to the focal adhesion. Its subcellular location is the cytoplasm. It is found in the cytoskeleton. Promotes EGF-induced cell migration by displacing tensin TNS3 from the cytoplasmic tail of integrin ITGB1 which results in dissociation of TNS3 from focal adhesions, disassembly of actin stress fibers and initiation of cell migration. Suppresses ligand-induced degradation of EGFR by reducing EGFR ubiquitination in the presence of EGF. Increases MET protein stability by inhibiting MET endocytosis and subsequent lysosomal degradation which leads to increased cell survival, proliferation and migration. This is Tensin-4 (Tns4) from Rattus norvegicus (Rat).